Reading from the N-terminus, the 65-residue chain is Large ribosomal subunit protein uL29 (65 aa).

This sequence belongs to the universal ribosomal protein uL29 family.

The chain is Large ribosomal subunit protein uL29 from Parabacteroides distasonis (strain ATCC 8503 / DSM 20701 / CIP 104284 / JCM 5825 / NCTC 11152).